The chain runs to 257 residues: Short chain dehydrogenase prhI (257 aa).

The helical transmembrane segment at 7-29 (HVVIITGSSSGIGLAASTLALAS) threads the bilayer. An NADP(+)-binding site is contributed by Ile11. A glycan (N-linked (GlcNAc...) asparagine) is linked at Asn50. Asp57 serves as a coordination point for NADP(+). Residues Asn92 and Asn110 are each glycosylated (N-linked (GlcNAc...) asparagine). Residues Arg119, Tyr151, Lys155, and Val184 each contribute to the NADP(+) site. The active-site Proton acceptor is the Tyr151. Lys155 (lowers pKa of active site Tyr) is an active-site residue.

Belongs to the short-chain dehydrogenases/reductases (SDR) family.

It localises to the membrane. It carries out the reaction protoaustinoid A + A = protoaustinoid B + AH2. The protein operates within secondary metabolite biosynthesis; terpenoid biosynthesis. Its function is as follows. Short chain dehydrogenase; part of the gene cluster that mediates the biosynthesis of paraherquonin, a meroterpenoid with a unique, highly congested hexacyclic molecular architecture. The first step of the pathway is the synthesis of 3,5-dimethylorsellinic acid (DMOA) by the polyketide synthase prhL. Synthesis of DMOA is followed by farnesylation by the prenyltransferase prhE, methylesterification by the methyl-transferase prhM, epoxidation of the prenyl chain by the flavin-dependent monooxygenase prhF, and cyclization of the farnesyl moiety by the terpene cyclase prhH, to yield the tetracyclic intermediate, protoaustinoid A. The short chain dehydrogenase prhI then oxidizes the C-3 alcohol group of the terpene cyclase product to transform protoaustinoid A into protoaustinoid B. The FAD-binding monooxygenase prhJ catalyzes the oxidation of protoaustinoid B into preaustinoid A which is further oxidized into preaustinoid A1 by FAD-binding monooxygenase phrK. Finally, prhA leads to berkeleydione via the berkeleyone B intermediate. PrhA is a multifunctional dioxygenase that first desaturates at C5-C6 to form berkeleyone B, followed by rearrangement of the A/B-ring to form the cycloheptadiene moiety in berkeleydione. Berkeleydione serves as the key intermediate for the biosynthesis of paraherquonin as well as many other meroterpenoids. The cytochrome P450 monooxygenases prhB, prhD, and prhN, as well as the isomerase prhC, are probably involved in the late stage of paraherquonin biosynthesis, after the production of berkeleydione. Especially prhC might be a multifunctional enzyme that catalyzes the D-ring expansion via intramolecular methoxy rearrangement, as well as the hydrolysis of the expanded D-ring. In Penicillium brasilianum, this protein is Short chain dehydrogenase prhI.